A 44-amino-acid chain; its full sequence is Photosystem II reaction center protein K (44 aa).

Residues 1–7 (MESLLLA) constitute a propeptide that is removed on maturation. Residues 23 to 43 (LPIIPVFFLLLAFVWQAAIGF) form a helical membrane-spanning segment.

Belongs to the PsbK family. As to quaternary structure, PSII is composed of 1 copy each of membrane proteins PsbA, PsbB, PsbC, PsbD, PsbE, PsbF, PsbH, PsbI, PsbJ, PsbK, PsbL, PsbM, PsbT, PsbX, PsbY, PsbZ, Psb30/Ycf12, at least 3 peripheral proteins of the oxygen-evolving complex and a large number of cofactors. It forms dimeric complexes.

It is found in the plastid. Its subcellular location is the chloroplast thylakoid membrane. In terms of biological role, one of the components of the core complex of photosystem II (PSII). PSII is a light-driven water:plastoquinone oxidoreductase that uses light energy to abstract electrons from H(2)O, generating O(2) and a proton gradient subsequently used for ATP formation. It consists of a core antenna complex that captures photons, and an electron transfer chain that converts photonic excitation into a charge separation. This is Photosystem II reaction center protein K from Trieres chinensis (Marine centric diatom).